A 278-amino-acid polypeptide reads, in one-letter code: 4-deoxy-L-threo-5-hexosulose-uronate ketol-isomerase (278 aa).

4 residues coordinate Zn(2+): H196, H198, E203, and H245.

Belongs to the KduI family. Zn(2+) serves as cofactor.

The enzyme catalyses 5-dehydro-4-deoxy-D-glucuronate = 3-deoxy-D-glycero-2,5-hexodiulosonate. Its pathway is glycan metabolism; pectin degradation; 2-dehydro-3-deoxy-D-gluconate from pectin: step 4/5. In terms of biological role, catalyzes the isomerization of 5-dehydro-4-deoxy-D-glucuronate to 3-deoxy-D-glycero-2,5-hexodiulosonate. This Enterobacter sp. (strain 638) protein is 4-deoxy-L-threo-5-hexosulose-uronate ketol-isomerase.